The following is a 90-amino-acid chain: MKKKGGRKIFGFMVKEEKEENRGSVEFQVFSFTNKIRRLASHLELHKKDFSSERGLRRLLGKRQRLLAYLAKKNRVRYKKLISQLDIREK.

This sequence belongs to the universal ribosomal protein uS15 family. In terms of assembly, part of the 30S ribosomal subunit.

The protein resides in the plastid. The protein localises to the chloroplast. This is Small ribosomal subunit protein uS15c (rps15-A) from Zea mays (Maize).